A 469-amino-acid polypeptide reads, in one-letter code: Glutamine synthetase (469 aa).

The GS beta-grasp domain occupies 15-96 (EDVKFIDVRF…INFFIHDPIT (82 aa)). One can recognise a GS catalytic domain in the interval 104 to 469 (PRNVAKKAEA…PYEYEQYYDV (366 aa)). Mg(2+) is bound by residues Glu129 and Glu131. Glu205 lines the ATP pocket. Mg(2+) is bound by residues Glu210 and Glu218. 221-223 (YKF) lines the ATP pocket. L-glutamate contacts are provided by residues 262–263 (NG) and Gly263. His267 lines the Mg(2+) pocket. Residues 269–271 (HQS) and Ser271 contribute to the ATP site. Arg320, Glu326, and Arg338 together coordinate L-glutamate. Arg338, Arg343, and Lys352 together coordinate ATP. Glu357 lines the Mg(2+) pocket. Arg359 is an L-glutamate binding site. Tyr397 is subject to O-AMP-tyrosine.

Belongs to the glutamine synthetase family. Oligomer of 12 subunits arranged in the form of two hexagons. Mg(2+) serves as cofactor.

It localises to the cytoplasm. It catalyses the reaction L-glutamate + NH4(+) + ATP = L-glutamine + ADP + phosphate + H(+). With respect to regulation, the activity of this enzyme could be controlled by adenylation under conditions of abundant glutamine. Functionally, catalyzes the ATP-dependent biosynthesis of glutamine from glutamate and ammonia. This chain is Glutamine synthetase, found in Streptomyces viridochromogenes.